A 66-amino-acid chain; its full sequence is MAKDAITGARTRFGNQRSHALNSSRRSWKPNLQKVTVKINGAAAKKVYLTARTLKAGLKNGSIERV.

The segment at 1–26 (MAKDAITGARTRFGNQRSHALNSSRR) is disordered. The segment covering 13-25 (FGNQRSHALNSSR) has biased composition (polar residues).

This sequence belongs to the bacterial ribosomal protein bL28 family.

The sequence is that of Large ribosomal subunit protein bL28 from Leuconostoc citreum (strain KM20).